Reading from the N-terminus, the 963-residue chain is Thrombospondin-4 (963 aa).

The N-terminal stretch at 1–26 (MPAPRAAAAAFLLLHLVLQPWQRTSA) is a signal peptide. The Laminin G-like domain occupies 29–194 (TPQVFDLLPS…LEELKLVVRG (166 aa)). The Cell attachment site motif lies at 138–140 (RGD). Residues 288-327 (PTRHCDSSPCFRGVRCTDTRDGFQCGPCPDGYTGNGITCS) enclose the EGF-like 1 domain. 21 disulfides stabilise this stretch: cysteine 292-cysteine 303, cysteine 297-cysteine 312, cysteine 315-cysteine 326, cysteine 332-cysteine 343, cysteine 337-cysteine 352, cysteine 355-cysteine 379, cysteine 385-cysteine 396, cysteine 390-cysteine 405, cysteine 408-cysteine 420, cysteine 426-cysteine 440, cysteine 434-cysteine 450, cysteine 452-cysteine 463, cysteine 479-cysteine 484, cysteine 489-cysteine 509, cysteine 525-cysteine 545, cysteine 548-cysteine 568, cysteine 584-cysteine 604, cysteine 607-cysteine 627, cysteine 645-cysteine 665, cysteine 685-cysteine 705, and cysteine 721-cysteine 942. The 38-residue stretch at 328–365 (DVDECKYHPCYPGVRCVNLAPGFRCDACPVGFTGPMVQ) folds into the EGF-like 2; calcium-binding domain. The 38-residue stretch at 381–418 (DVDECQNGACVLNSICINTLGSYRCGPCKPGYTGDQTR) folds into the EGF-like 3; calcium-binding domain. The region spanning 422 to 464 (TERSCRNPEQNPCSVHAQCIEERQGDVTCVCGVGWAGDGYVCG) is the EGF-like 4 domain. 8 TSP type-3 repeats span residues 465 to 497 (KDVD…NSGQ), 498 to 533 (EDAD…NIDQ), 534 to 556 (RNSD…NNDQ), 557 to 592 (KDTD…NRDQ), 593 to 615 (QDRD…NPNQ), 616 to 653 (SDVD…NSSQ), 654 to 693 (LDTD…NPAQ), and 694 to 729 (EDSN…EITL). The short motif at 564 to 566 (RGD) is the Cell attachment site element. Positions 579–676 (NILDNCPRVP…DDDDNDGIPD (98 aa)) are disordered. Asparagine 614 and asparagine 650 each carry an N-linked (GlcNAc...) asparagine glycan. Polar residues predominate over residues 642 to 654 (TDNCPTVINSSQL). A compositionally biased stretch (acidic residues) spans 662–673 (GDECDDDDDNDG). The region spanning 733 to 947 (RAYQTVVLDP…LKYRCNDTIP (215 aa)) is the TSP C-terminal domain. An N-linked (GlcNAc...) asparagine glycan is attached at asparagine 943.

Belongs to the thrombospondin family. As to quaternary structure, homopentamer; disulfide-linked. Interacts with PTBP3. Interacts (via EGF-like 3; calcium-binding domain) with ATF6 and facilitates its processing, activation and nuclear translocation. Interacts with NOTCH1. Heart. Up-regulated in the heart in response to ischemic injury and pathology (at protein level). Astrocytes; expressed at high levels in subventricular zone (SVZ)-derived astrocytes and at low levels in cortical astrocytes. In response to peripheral nerve injury, significantly up-regulated in the dorsal spinal cord (at protein level).

It is found in the endoplasmic reticulum. The protein localises to the sarcoplasmic reticulum. It localises to the secreted. The protein resides in the extracellular space. Its subcellular location is the extracellular matrix. Its function is as follows. Adhesive glycoprotein that mediates cell-to-cell and cell-to-matrix interactions and is involved in various processes including cellular proliferation, migration, adhesion and attachment, inflammatory response to CNS injury, regulation of vascular inflammation and adaptive responses of the heart to pressure overload and in myocardial function and remodeling. Binds to structural extracellular matrix (ECM) proteins and modulates the ECM in response to tissue damage, contributing to cardioprotective and adaptive ECM remodeling. Plays a role in ER stress response, via its interaction with the activating transcription factor 6 alpha (ATF6) which produces adaptive ER stress response factors and protects myocardium from pressure overload. May contribute to spinal presynaptic hypersensitivity and neuropathic pain states after peripheral nerve injury. May play a role in regulating protective astrogenesis from the subventricular zone (SVZ) niche after injury in a NOTCH1-dependent manner. The chain is Thrombospondin-4 (Thbs4) from Mus musculus (Mouse).